Reading from the N-terminus, the 494-residue chain is Probable malate:quinone oxidoreductase (494 aa).

The protein belongs to the MQO family. The cofactor is FAD.

It carries out the reaction (S)-malate + a quinone = a quinol + oxaloacetate. Its pathway is carbohydrate metabolism; tricarboxylic acid cycle; oxaloacetate from (S)-malate (quinone route): step 1/1. The protein is Probable malate:quinone oxidoreductase of Kocuria rhizophila (strain ATCC 9341 / DSM 348 / NBRC 103217 / DC2201).